The following is a 304-amino-acid chain: Non-specific ribonucleoside hydrolase RihC (304 aa).

Residue His233 is part of the active site.

The protein belongs to the IUNH family. RihC subfamily.

Hydrolyzes both purine and pyrimidine ribonucleosides with a broad-substrate specificity. This is Non-specific ribonucleoside hydrolase RihC from Shigella dysenteriae serotype 1 (strain Sd197).